The primary structure comprises 228 residues: Biosynthetic peptidoglycan transglycosylase (228 aa).

Residues 8-28 (ILAALVAAFLLYNLWVLGHII) traverse the membrane as a helical segment.

It belongs to the glycosyltransferase 51 family.

It is found in the cell inner membrane. The catalysed reaction is [GlcNAc-(1-&gt;4)-Mur2Ac(oyl-L-Ala-gamma-D-Glu-L-Lys-D-Ala-D-Ala)](n)-di-trans,octa-cis-undecaprenyl diphosphate + beta-D-GlcNAc-(1-&gt;4)-Mur2Ac(oyl-L-Ala-gamma-D-Glu-L-Lys-D-Ala-D-Ala)-di-trans,octa-cis-undecaprenyl diphosphate = [GlcNAc-(1-&gt;4)-Mur2Ac(oyl-L-Ala-gamma-D-Glu-L-Lys-D-Ala-D-Ala)](n+1)-di-trans,octa-cis-undecaprenyl diphosphate + di-trans,octa-cis-undecaprenyl diphosphate + H(+). It participates in cell wall biogenesis; peptidoglycan biosynthesis. Peptidoglycan polymerase that catalyzes glycan chain elongation from lipid-linked precursors. The sequence is that of Biosynthetic peptidoglycan transglycosylase from Chromobacterium violaceum (strain ATCC 12472 / DSM 30191 / JCM 1249 / CCUG 213 / NBRC 12614 / NCIMB 9131 / NCTC 9757 / MK).